The following is a 400-amino-acid chain: Apolipoprotein N-acyltransferase (400 aa).

The next 5 membrane-spanning stretches (helical) occupy residues 16–36, 42–62, 67–87, 97–117, and 123–143; these read AISP…VLFV, FGVG…GLRY, FLIP…FYIG, FAFL…IVPE, and SYIG…WILF. Residues 181–400 enclose the CN hydrolase domain; it reads AQSAVSQDFD…AIITPFVSSR (220 aa). The active-site Proton acceptor is the Glu-222. Lys-283 is an active-site residue. Residue Cys-332 is the Nucleophile of the active site. Residues 377-397 form a helical membrane-spanning segment; that stretch reads YGSVIFHATNLSPAAIITPFV.

It belongs to the CN hydrolase family. Apolipoprotein N-acyltransferase subfamily.

Its subcellular location is the cell inner membrane. It catalyses the reaction N-terminal S-1,2-diacyl-sn-glyceryl-L-cysteinyl-[lipoprotein] + a glycerophospholipid = N-acyl-S-1,2-diacyl-sn-glyceryl-L-cysteinyl-[lipoprotein] + a 2-acyl-sn-glycero-3-phospholipid + H(+). The protein operates within protein modification; lipoprotein biosynthesis (N-acyl transfer). Its function is as follows. Catalyzes the phospholipid dependent N-acylation of the N-terminal cysteine of apolipoprotein, the last step in lipoprotein maturation. The sequence is that of Apolipoprotein N-acyltransferase from Helicobacter hepaticus (strain ATCC 51449 / 3B1).